A 492-amino-acid chain; its full sequence is Glutamyl-tRNA(Gln) amidotransferase subunit A (492 aa).

Catalysis depends on charge relay system residues Lys79 and Ser154. Residue Ser178 is the Acyl-ester intermediate of the active site.

Belongs to the amidase family. GatA subfamily. Heterotrimer of A, B and C subunits.

It carries out the reaction L-glutamyl-tRNA(Gln) + L-glutamine + ATP + H2O = L-glutaminyl-tRNA(Gln) + L-glutamate + ADP + phosphate + H(+). Functionally, allows the formation of correctly charged Gln-tRNA(Gln) through the transamidation of misacylated Glu-tRNA(Gln) in organisms which lack glutaminyl-tRNA synthetase. The reaction takes place in the presence of glutamine and ATP through an activated gamma-phospho-Glu-tRNA(Gln). This chain is Glutamyl-tRNA(Gln) amidotransferase subunit A, found in Acinetobacter baumannii (strain ATCC 17978 / DSM 105126 / CIP 53.77 / LMG 1025 / NCDC KC755 / 5377).